The primary structure comprises 809 residues: MANPKLTRVLSTRDRVQDTLSAHRNELVALLSRYVDQGKGILQPHNLIDELESVIGDDETKKSLSDGPFGEILKSAMEAIVVPPFVALAVRPRPGVWEYVRVNVFELSVEQLTVSEYLRFKEELVDGPNSDPFCLELDFEPFNANVPRPSRSSSIGNGVQFLNRHLSSVMFRNKDCLEPLLDFLRVHKYKGHPLMLNDRIQSISRLQIQLSKAEDHISKLSQETPFSEFEYALQGMGFEKGWGDTAGRVLEMMHLLSDILQAPDPSSLEKFLGMVPMVFNVVILSPHGYFGQANVLGLPDTGGQVVYILDQVRALETEMLLRIKRQGLDISPSILIVTRLIPDAKGTTCNQRLERVSGTEHTHILRVPFRSEKGILRKWISRFDVWPYLENYAQDAASEIVGELQGVPDFIIGNYSDGNLVASLMAHRMGVTQCTIAHALEKTKYPDSDIYWKDFDNKYHFSCQFTADLIAMNNADFIITSTYQEIAGTKNTVGQYESHGAFTLPGLYRVVHGIDVFDPKFNIVSPGADMTIYFPYSEETRRLTALHGSIEEMLYSPDQTDEHVGTLSDRSKPILFSMARLDKVKNISGLVEMYSKNTKLRELVNLVVIAGNIDVNKSKDREEIVEIEKMHNLMKNYKLDGQFRWITAQTNRARNGELYRYIADTRGAFAQPAFYEAFGLTVVEAMTCGLPTFATCHGGPAEIIEHGLSGFHIDPYHPEQAGNIMADFFERCKEDPNHWKKVSDAGLQRIYERYTWKIYSERLMTLAGVYGFWKYVSKLERRETRRYLEMFYILKFRDLVKTVPSTADD.

Residues 277-755 form a GT-B glycosyltransferase region; that stretch reads MVFNVVILSP…GLQRIYERYT (479 aa).

This sequence belongs to the glycosyltransferase 1 family. Plant sucrose synthase subfamily. In terms of tissue distribution, detected in the whole plant with highest expression in developing siliques, vasculature of cotyledons and stomatal guard cells. Also detected throughout the mature parts of the root but not in the expanding zone.

It catalyses the reaction an NDP-alpha-D-glucose + D-fructose = a ribonucleoside 5'-diphosphate + sucrose + H(+). In terms of biological role, sucrose-cleaving enzyme that provides UDP-glucose and fructose for various metabolic pathways. Modulates metabolic homeostasis and direct carbon towards starch synthesis in developing seeds. The chain is Sucrose synthase 3 (SUS3) from Arabidopsis thaliana (Mouse-ear cress).